An 859-amino-acid chain; its full sequence is DNA mismatch repair protein MutS (859 aa).

612–619 (GPNMGGKS) provides a ligand contact to ATP. Positions 797 to 822 (SKPLAPSATPPSSYAAPSPAAAPAQA) are disordered.

The protein belongs to the DNA mismatch repair MutS family.

In terms of biological role, this protein is involved in the repair of mismatches in DNA. It is possible that it carries out the mismatch recognition step. This protein has a weak ATPase activity. In Alcanivorax borkumensis (strain ATCC 700651 / DSM 11573 / NCIMB 13689 / SK2), this protein is DNA mismatch repair protein MutS.